The sequence spans 1018 residues: Importin-9 (1018 aa).

The 80-residue stretch at 35–114 folds into the Importin N-terminal domain; that stretch reads TEKRIKQLEY…RNILPNGLYD (80 aa). The tract at residues 921-950 is disordered; that stretch reads GKSDEPLTDSEEDGDDEDAPGNPDKPRYIS. Residues 926 to 939 are compositionally biased toward acidic residues; that stretch reads PLTDSEEDGDDEDA.

The protein belongs to the importin beta family.

It is found in the cytoplasm. Its subcellular location is the nucleus. Its function is as follows. Nuclear transport receptor that mediates nuclear import of proteins. Serves as receptor for nuclear localization signals (NLS) in cargo substrates. Is thought to mediate docking of the importin/substrate complex to the nuclear pore complex (NPC) through binding to nucleoporin and the complex is subsequently translocated through the pore by an energy requiring, Ran-dependent mechanism. Mediates the import of pre-assembled proteasomes into the nucleus during the late stages of sperm development. The protein is Importin-9 of Drosophila melanogaster (Fruit fly).